We begin with the raw amino-acid sequence, 157 residues long: Cysteine protease Nivulian-2 (157 aa).

It belongs to the intron maturase 2 family. MatK subfamily. In terms of assembly, monomer. Glycosylated. In terms of tissue distribution, accumulates in latex (at protein level).

With respect to regulation, inhibited by HgCl(2), iodoacetamide (IAA) and, to a far lesser extent, by SDS, hydrogen peroxide H(1)O(2), KCl, NaCl, ZnCl(2), AgSO(4), CdCl(2), FeCl(3), PMSF, Pepstatin A and EDTA. Repressed moderately by many organic solvents such as diethyl ether, ethy lacetate, acetophenone, butanol, trichloroethylene, tetrahydrofuran, methanol, chloroform and dichloromethane, and, to a lesser extent, by propanol, benzyl alcohol and chlorobenzene. Its function is as follows. Cysteine protease inducing milk clotting by cleaving casein. Exhibits biomedical activities such as wound healing, haemostatic and antibacterial activity, as well as agricultural application in biocontrol process against the infectious management of the root knot nematode Meloidogyne incognita. The polypeptide is Cysteine protease Nivulian-2 (Euphorbia nivulia (Leafy milk hedge)).